Consider the following 506-residue polypeptide: Sporulation kinase D (506 aa).

Helical transmembrane passes span 17–37 (VKLYIILVVIPAIVISFFVYE) and 250–270 (LVLPLSCIIVLLNILFILVLY). In terms of domain architecture, Histidine kinase spans 298 to 505 (STAHEIRNPL…EVTITLPVSA (208 aa)). At histidine 301 the chain carries Phosphohistidine; by autocatalysis.

In terms of assembly, oligomerizes, probably forms homodimers; oligomerization is assisted by FloT. Interacts with FloT.

The protein resides in the cell membrane. The catalysed reaction is ATP + protein L-histidine = ADP + protein N-phospho-L-histidine.. In terms of biological role, phosphorylates the sporulation-regulatory protein spo0F and, to a minor extent, is responsible for heterogeneous expression of spo0A during logarithmical growth. Also phosphorylates spo0A under biofilm growth conditions. This is Sporulation kinase D (kinD) from Bacillus subtilis (strain 168).